The sequence spans 327 residues: D-alanine--D-alanine ligase (327 aa).

Positions 113–312 (KRLWMTYGLA…YEDFVMQVVA (200 aa)) constitute an ATP-grasp domain. Residue 139 to 194 (AADLGLPLIVKPAREGSSIGLTKVTAADQMRAAFEKAAALDNDVIAETFIDGAELT) participates in ATP binding. Mg(2+) is bound by residues D266, E279, and N281.

The protein belongs to the D-alanine--D-alanine ligase family. Mg(2+) serves as cofactor. Mn(2+) is required as a cofactor.

Its subcellular location is the cytoplasm. It catalyses the reaction 2 D-alanine + ATP = D-alanyl-D-alanine + ADP + phosphate + H(+). Its pathway is cell wall biogenesis; peptidoglycan biosynthesis. In terms of biological role, cell wall formation. The protein is D-alanine--D-alanine ligase of Cupriavidus necator (strain ATCC 17699 / DSM 428 / KCTC 22496 / NCIMB 10442 / H16 / Stanier 337) (Ralstonia eutropha).